A 644-amino-acid polypeptide reads, in one-letter code: Karyogamy protein KAR9 (644 aa).

Serine 496 carries the post-translational modification Phosphoserine. Disordered stretches follow at residues 506–534 (SVPP…PDSF) and 606–644 (PNSQ…TPTY). Composition is skewed to basic and acidic residues over residues 523–534 (SRGENEKSPDSF) and 634–644 (REGRLDKTPTY).

It is found in the nucleus. The protein localises to the cytoplasm. Its subcellular location is the cytoskeleton. Its function is as follows. Involved in karyogamy. Component of a cortical adaptor complex that orients cytoplasmic microtubules. It may be involved in anchoring cytoplasmic microtubules to the cell cortex. The chain is Karyogamy protein KAR9 (KAR9) from Saccharomyces cerevisiae (strain ATCC 204508 / S288c) (Baker's yeast).